The chain runs to 320 residues: Malate dehydrogenase (320 aa).

NAD(+) contacts are provided by residues 10–15 and Asp-34; that span reads GAGQIG. Residues Arg-83 and Arg-89 each coordinate substrate. Residues Asn-96 and 119–121 each bind NAD(+); that span reads ITN. Positions 121 and 152 each coordinate substrate. His-176 serves as the catalytic Proton acceptor.

It belongs to the LDH/MDH superfamily. MDH type 3 family.

It carries out the reaction (S)-malate + NAD(+) = oxaloacetate + NADH + H(+). Catalyzes the reversible oxidation of malate to oxaloacetate. The chain is Malate dehydrogenase from Beijerinckia indica subsp. indica (strain ATCC 9039 / DSM 1715 / NCIMB 8712).